Here is a 99-residue protein sequence, read N- to C-terminus: Small ribosomal subunit protein uS19 (99 aa).

The tract at residues 77–99 is disordered; the sequence is TRTFHGHSGDKKAKVAKGGPGGR.

It belongs to the universal ribosomal protein uS19 family.

Its function is as follows. Protein S19 forms a complex with S13 that binds strongly to the 16S ribosomal RNA. The chain is Small ribosomal subunit protein uS19 from Sorangium cellulosum (strain So ce56) (Polyangium cellulosum (strain So ce56)).